The sequence spans 137 residues: Small ribosomal subunit protein uS9 (137 aa).

It belongs to the universal ribosomal protein uS9 family.

The protein is Small ribosomal subunit protein uS9 of Picosynechococcus sp. (strain ATCC 27264 / PCC 7002 / PR-6) (Agmenellum quadruplicatum).